The sequence spans 679 residues: Protein hook (679 aa).

The region spanning 6 to 123 (NEMYYSLLEW…RLLQLVLGCA (118 aa)) is the Calponin-homology (CH) domain. 2 coiled-coil regions span residues 135–437 (EIMC…LKCG) and 480–574 (QTAL…QEIL).

It belongs to the hook family. Homodimer. Interacts with microtubules via its N-terminus.

Its subcellular location is the cytoplasm. The protein localises to the cytoskeleton. It localises to the endosome. The protein resides in the synapse. In terms of biological role, involved in endocytic trafficking by stabilizing organelles of the endocytic pathway. Probably acts as a cytoskeletal linker protein required to tether endosome vesicles to the cytoskeleton. Involved in modulation of endocytosis at stages required for down-regulation of membrane proteins that control synapse size. Not involved in synaptic vesicle recycling. Required in R7 cells for boss endocytosis into multivesicular bodies (MVBs). Has a role in regulating adult longevity. The chain is Protein hook from Drosophila sechellia (Fruit fly).